We begin with the raw amino-acid sequence, 367 residues long: Phospho-N-acetylmuramoyl-pentapeptide-transferase (367 aa).

10 consecutive transmembrane segments (helical) span residues 30-50 (AAAI…IALL), 71-91 (LPTM…LLWA), 94-114 (TDPH…IGFI), 138-158 (ISLG…SVLM), 169-189 (LTID…TALS), 200-220 (GLAA…AYLA), 237-257 (GGEI…FLWF), 264-284 (IIMG…TALL), 289-309 (LLLP…SLQV), and 344-364 (KIVI…LMTL).

This sequence belongs to the glycosyltransferase 4 family. MraY subfamily. It depends on Mg(2+) as a cofactor.

The protein resides in the cell inner membrane. It carries out the reaction UDP-N-acetyl-alpha-D-muramoyl-L-alanyl-gamma-D-glutamyl-meso-2,6-diaminopimeloyl-D-alanyl-D-alanine + di-trans,octa-cis-undecaprenyl phosphate = di-trans,octa-cis-undecaprenyl diphospho-N-acetyl-alpha-D-muramoyl-L-alanyl-D-glutamyl-meso-2,6-diaminopimeloyl-D-alanyl-D-alanine + UMP. Its pathway is cell wall biogenesis; peptidoglycan biosynthesis. Functionally, catalyzes the initial step of the lipid cycle reactions in the biosynthesis of the cell wall peptidoglycan: transfers peptidoglycan precursor phospho-MurNAc-pentapeptide from UDP-MurNAc-pentapeptide onto the lipid carrier undecaprenyl phosphate, yielding undecaprenyl-pyrophosphoryl-MurNAc-pentapeptide, known as lipid I. In Chlorobium phaeovibrioides (strain DSM 265 / 1930) (Prosthecochloris vibrioformis (strain DSM 265)), this protein is Phospho-N-acetylmuramoyl-pentapeptide-transferase.